The sequence spans 203 residues: E3 ubiquitin-protein ligase RNF152 (203 aa).

The RING-type zinc-finger motif lies at 12–55 (CQICFNYYSPRRRPKLLDCKHTCCSVCLQQMRTSQKDVRCPWCR). Residues 106–165 (ISKERALLPGDMGCRLLPGSQQKSVTVVTVPAEQRPLQGGAPQEAVEEEPDRRGVAKSST) form a necessary for interaction with RRAGA region. The chain crosses the membrane as a helical span at residues 167-187 (SGVCTVILVACVLVFLLGIVL).

The protein belongs to the RNF152 family. As to quaternary structure, interacts with RRAGA (inactive GDP-bound form); stimulated by amino acid starvation. In terms of processing, ubiquitinated. Autoubiquitinated in vitro, leading to its degradation by the proteasome.

Its subcellular location is the lysosome membrane. The enzyme catalyses S-ubiquitinyl-[E2 ubiquitin-conjugating enzyme]-L-cysteine + [acceptor protein]-L-lysine = [E2 ubiquitin-conjugating enzyme]-L-cysteine + N(6)-ubiquitinyl-[acceptor protein]-L-lysine.. The protein operates within protein modification; protein ubiquitination. E3 ubiquitin-protein ligase that acts as a negative regulator of mTORC1 signaling by mediating ubiquitination of RagA/RRAGA and RHEB. Catalyzes 'Lys-63'-linked polyubiquitination of RagA/RRAGA in response to amino acid starvation, thereby regulating mTORC1 signaling. Also mediates monoubiquitination of RHEB, promoting its association with the TSC-TBC complex and subsequent inhibition. Also mediates 'Lys-48'-linked polyubiquitination of target proteins and their subsequent targeting to the proteasome for degradation. Induces apoptosis when overexpressed. This Ailuropoda melanoleuca (Giant panda) protein is E3 ubiquitin-protein ligase RNF152.